A 342-amino-acid polypeptide reads, in one-letter code: MSEEHGHTPVMRDRMVELVGLGVNSENAPARPVIVDGTLGAGGHSEAFLDAFPHAIVVGLDRDPNALAEANARLARFGDRFVSYQTRFDGVTEALEDLMEQGKLPASVREHGISGFLFDLGVSSMQLDQPERGFAYAVDAPLDMRMDPSSPLTAAEILNTYSHGEIARILKTYGDERFAGKIASAVVREREKQPFENSARLVELLYATIPAASRRTGGHPAKRTFQALRVEVNAELESLENLIPEISRWLHVGAVGVFMSYQSLEDKIVKKALVQLSTSKTPPGLPMELPGMEAEFELRTRGAEKASEAEIEQNSRAAPVRVRAYSRVSDRGKTIFPLDTPS.

S-adenosyl-L-methionine contacts are provided by residues 42–44 (GGH), aspartate 61, phenylalanine 88, aspartate 119, and glutamine 126.

This sequence belongs to the methyltransferase superfamily. RsmH family.

The protein localises to the cytoplasm. The catalysed reaction is cytidine(1402) in 16S rRNA + S-adenosyl-L-methionine = N(4)-methylcytidine(1402) in 16S rRNA + S-adenosyl-L-homocysteine + H(+). Specifically methylates the N4 position of cytidine in position 1402 (C1402) of 16S rRNA. This chain is Ribosomal RNA small subunit methyltransferase H, found in Corynebacterium jeikeium (strain K411).